The sequence spans 736 residues: Prolyl 3-hydroxylase 1 (736 aa).

A signal peptide spans 1-22 (MAVRALKLLTTLLAVVAAASQA). TPR repeat units lie at residues 35-68 (PDLL…RAAL), 143-176 (RSPY…NPEH), 205-238 (HMQE…YFVA), and 301-334 (PSHY…FPND). Asparagine 316 is a glycosylation site (N-linked (GlcNAc...) asparagine). The stretch at 401 to 439 (KRLQEKQKSERETAVRISQEIGNLMKEIETLVEEKTKES) forms a coiled coil. 2 N-linked (GlcNAc...) asparagine glycosylation sites follow: asparagine 467 and asparagine 540. Positions 564 to 678 (SHLVCRTAIE…RCAIALWFTL (115 aa)) constitute a Fe2OG dioxygenase domain. Histidine 587, aspartate 589, and histidine 659 together coordinate Fe cation. Arginine 669 is an active-site residue. A disordered region spans residues 699–736 (SPEEMDLSQEQPLDAQQGPPEPAQESLSGSESKPKDEL). Positions 733–736 (KDEL) match the Prevents secretion from ER motif.

Belongs to the leprecan family. The cofactor is Fe cation. L-ascorbate serves as cofactor. In terms of processing, O-glycosylated; chondroitin sulfate.

It localises to the endoplasmic reticulum. The protein resides in the secreted. It is found in the extracellular space. Its subcellular location is the extracellular matrix. It catalyses the reaction L-prolyl-[collagen] + 2-oxoglutarate + O2 = trans-3-hydroxy-L-prolyl-[collagen] + succinate + CO2. Basement membrane-associated chondroitin sulfate proteoglycan (CSPG). Has prolyl 3-hydroxylase activity catalyzing the post-translational formation of 3-hydroxyproline in -Xaa-Pro-Gly- sequences in collagens, especially types IV and V. May be involved in the secretory pathway of cells. Has growth suppressive activity in fibroblasts. The chain is Prolyl 3-hydroxylase 1 from Homo sapiens (Human).